A 470-amino-acid polypeptide reads, in one-letter code: Leucine-rich repeat extensin-like protein 6 (470 aa).

An N-terminal signal peptide occupies residues 1–28 (MREDTFFFQWWFLVSGLSFIFLLPQAFT). N-linked (GlcNAc...) asparagine glycosylation occurs at Asn-83. LRR repeat units lie at residues 98 to 122 (VLTV…LGLL), 123 to 146 (TDLA…LKCL), 147 to 170 (HLLH…IFSL), 171 to 194 (PSLK…LFDL), 196 to 217 (LDAL…IGNS), 219 to 241 (VSVL…FYKM), 243 to 265 (KTLH…EIGL), 266 to 290 (LNQL…IGDM), 291 to 314 (KSLE…ICRL), and 316 to 337 (RLEN…CLRL). Asn-319 carries an N-linked (GlcNAc...) asparagine glycan. Positions 378–411 (SPPPPPPPPPPPPPPPPPPPPPPPPPPPPPYVYP) are disordered. The interval 378–470 (SPPPPPPPPP…CNDLPTPVHY (93 aa)) is contains the Ser-Pro(4) repeats.

Post-translationally, hydroxylated on proline residues in the S-P-P-P-P repeat. O-glycosylated on hydroxyprolines. Expressed in roots.

The protein localises to the secreted. It is found in the cell wall. Modulates cell morphogenesis by regulating cell wall formation and assembly, and/or growth polarization. The chain is Leucine-rich repeat extensin-like protein 6 (LRX6) from Arabidopsis thaliana (Mouse-ear cress).